The chain runs to 498 residues: Glycerol kinase (498 aa).

Thr13 lines the ADP pocket. Residues Thr13, Thr14, and Ser15 each coordinate ATP. Position 13 (Thr13) interacts with sn-glycerol 3-phosphate. ADP is bound at residue Arg17. 4 residues coordinate sn-glycerol 3-phosphate: Arg83, Glu84, Tyr135, and Asp244. 5 residues coordinate glycerol: Arg83, Glu84, Tyr135, Asp244, and Gln245. ADP contacts are provided by Thr266 and Gly309. ATP contacts are provided by Thr266, Gly309, Gln313, and Gly410. ADP-binding residues include Gly410 and Asn414.

It belongs to the FGGY kinase family. In terms of assembly, homotetramer and homodimer (in equilibrium).

The enzyme catalyses glycerol + ATP = sn-glycerol 3-phosphate + ADP + H(+). The protein operates within polyol metabolism; glycerol degradation via glycerol kinase pathway; sn-glycerol 3-phosphate from glycerol: step 1/1. With respect to regulation, activated by phosphorylation and inhibited by fructose 1,6-bisphosphate (FBP). Key enzyme in the regulation of glycerol uptake and metabolism. Catalyzes the phosphorylation of glycerol to yield sn-glycerol 3-phosphate. This is Glycerol kinase from Symbiobacterium thermophilum (strain DSM 24528 / JCM 14929 / IAM 14863 / T).